The primary structure comprises 64 residues: Beta sliding clamp (64 aa).

The protein belongs to the beta sliding clamp family. In terms of assembly, forms a ring-shaped head-to-tail homodimer around DNA which binds and tethers DNA polymerases and other proteins to the DNA. The DNA replisome complex has a single clamp-loading complex (3 tau and 1 each of delta, delta', psi and chi subunits) which binds 3 Pol III cores (1 core on the leading strand and 2 on the lagging strand) each with a beta sliding clamp dimer. Additional proteins in the replisome are other copies of gamma, psi and chi, Ssb, DNA helicase and RNA primase.

It is found in the cytoplasm. Confers DNA tethering and processivity to DNA polymerases and other proteins. Acts as a clamp, forming a ring around DNA (a reaction catalyzed by the clamp-loading complex) which diffuses in an ATP-independent manner freely and bidirectionally along dsDNA. Initially characterized for its ability to contact the catalytic subunit of DNA polymerase III (Pol III), a complex, multichain enzyme responsible for most of the replicative synthesis in bacteria; Pol III exhibits 3'-5' exonuclease proofreading activity. The beta chain is required for initiation of replication as well as for processivity of DNA replication. This chain is Beta sliding clamp (dnaN), found in Actinobacillus pleuropneumoniae (Haemophilus pleuropneumoniae).